We begin with the raw amino-acid sequence, 124 residues long: Fluoride-specific ion channel FluC (124 aa).

4 helical membrane-spanning segments follow: residues 3–23 (YLLV…INTV), 36–56 (TFFI…YFAF), 66–86 (LFLM…SLDA), and 100–120 (LYVL…LALI). Residues Gly74 and Thr77 each coordinate Na(+).

This sequence belongs to the fluoride channel Fluc/FEX (TC 1.A.43) family.

Its subcellular location is the cell inner membrane. The catalysed reaction is fluoride(in) = fluoride(out). With respect to regulation, na(+) is not transported, but it plays an essential structural role and its presence is essential for fluoride channel function. Fluoride-specific ion channel. Important for reducing fluoride concentration in the cell, thus reducing its toxicity. The sequence is that of Fluoride-specific ion channel FluC from Rhodopseudomonas palustris (strain BisB5).